Consider the following 64-residue polypeptide: Defensin-like protein 41 (64 aa).

Positions 1–21 (MTQGKRKHPCDLKNPSKRAPP) are disordered. 4 cysteine pairs are disulfide-bonded: C10–C61, C24–C47, C33–C56, and C37–C58.

The protein belongs to the DEFL family.

In Arabidopsis thaliana (Mouse-ear cress), this protein is Defensin-like protein 41.